A 616-amino-acid chain; its full sequence is Dihydroxy-acid dehydratase (616 aa).

D81 provides a ligand contact to Mg(2+). C122 lines the [2Fe-2S] cluster pocket. Mg(2+)-binding residues include D123 and K124. N6-carboxylysine is present on K124. A [2Fe-2S] cluster-binding site is contributed by C195. E491 provides a ligand contact to Mg(2+). S517 acts as the Proton acceptor in catalysis.

It belongs to the IlvD/Edd family. In terms of assembly, homodimer. [2Fe-2S] cluster is required as a cofactor. Mg(2+) serves as cofactor.

It catalyses the reaction (2R)-2,3-dihydroxy-3-methylbutanoate = 3-methyl-2-oxobutanoate + H2O. It carries out the reaction (2R,3R)-2,3-dihydroxy-3-methylpentanoate = (S)-3-methyl-2-oxopentanoate + H2O. It participates in amino-acid biosynthesis; L-isoleucine biosynthesis; L-isoleucine from 2-oxobutanoate: step 3/4. The protein operates within amino-acid biosynthesis; L-valine biosynthesis; L-valine from pyruvate: step 3/4. In terms of biological role, functions in the biosynthesis of branched-chain amino acids. Catalyzes the dehydration of (2R,3R)-2,3-dihydroxy-3-methylpentanoate (2,3-dihydroxy-3-methylvalerate) into 2-oxo-3-methylpentanoate (2-oxo-3-methylvalerate) and of (2R)-2,3-dihydroxy-3-methylbutanoate (2,3-dihydroxyisovalerate) into 2-oxo-3-methylbutanoate (2-oxoisovalerate), the penultimate precursor to L-isoleucine and L-valine, respectively. This chain is Dihydroxy-acid dehydratase, found in Escherichia coli O157:H7 (strain EC4115 / EHEC).